The sequence spans 269 residues: 5'-nucleotidase SurE (269 aa).

Residues D11, D12, S43, and N101 each coordinate a divalent metal cation.

Belongs to the SurE nucleotidase family. It depends on a divalent metal cation as a cofactor.

Its subcellular location is the cytoplasm. It carries out the reaction a ribonucleoside 5'-phosphate + H2O = a ribonucleoside + phosphate. Functionally, nucleotidase that shows phosphatase activity on nucleoside 5'-monophosphates. This is 5'-nucleotidase SurE from Prochlorococcus marinus (strain MIT 9301).